Reading from the N-terminus, the 353-residue chain is Heterogeneous nuclear ribonucleoproteins A2/B1 (353 aa).

Residue Met1 is modified to N-acetylmethionine. Position 4 is a phosphothreonine (Thr4). A Glycyl lysine isopeptide (Lys-Gly) (interchain with G-Cter in SUMO2) cross-link involves residue Leu5. The short motif at 9–15 (PLERKKR) is the Nuclear localization signal element. 2 consecutive RRM domains span residues 21–104 (RKLF…ESGK) and 112–191 (KKLF…LSRQ). A Glycyl lysine isopeptide (Lys-Gly) (interchain with G-Cter in SUMO2) cross-link involves residue Lys22. Ser29 is subject to Phosphoserine. Position 38 is an omega-N-methylarginine (Arg38). Ser85 carries the phosphoserine modification. Lys104 carries the N6,N6-dimethyllysine; alternate modification. Lys104 is covalently cross-linked (Glycyl lysine isopeptide (Lys-Gly) (interchain with G-Cter in SUMO2); alternate). Glycyl lysine isopeptide (Lys-Gly) (interchain with G-Cter in SUMO2) cross-links involve residues Lys112, Lys120, and Lys137. Thr140 carries the post-translational modification Phosphothreonine. The residue at position 149 (Ser149) is a Phosphoserine. A Glycyl lysine isopeptide (Lys-Gly) (interchain with G-Cter in SUMO2) cross-link involves residue Lys152. Position 159 is a phosphothreonine (Thr159). Residues Lys168 and Lys173 each participate in a glycyl lysine isopeptide (Lys-Gly) (interchain with G-Cter in SUMO2); alternate cross-link. N6-acetyllysine; alternate occurs at positions 168 and 173. Thr176 is subject to Phosphothreonine. Lys186 participates in a covalent cross-link: Glycyl lysine isopeptide (Lys-Gly) (interchain with G-Cter in SUMO2). 2 positions are modified to phosphoserine: Ser189 and Ser201. The interval 193 to 353 (MQEVQSSRSG…SGGYGGRSRY (161 aa)) is disordered. Residues 202–223 (GRGGNFGFGDSRGGGGNFGPGP) show a composition bias toward gly residues. Position 203 is an asymmetric dimethylarginine; alternate (Arg203). Dimethylated arginine; alternate is present on Arg203. The residue at position 203 (Arg203) is an Omega-N-methylarginine; alternate. Position 212 is a phosphoserine (Ser212). At Arg213 the chain carries Asymmetric dimethylarginine; alternate. At Arg213 the chain carries Dimethylated arginine; alternate. Arg213 is subject to Omega-N-methylarginine; alternate. Position 225 is a phosphoserine (Ser225). The residue at position 228 (Arg228) is an Omega-N-methylarginine. Phosphoserine occurs at positions 231 and 236. Omega-N-methylarginine is present on Arg238. Ser259 is subject to Phosphoserine. Asymmetric dimethylarginine; alternate is present on Arg266. At Arg266 the chain carries Omega-N-methylarginine; alternate. The nuclear targeting sequence stretch occupies residues 308 to 347 (QQPSNYGPMKSGNFGGSRNMGGPYGGGNYGPGGSGGSGGY). Positions 320–353 (NFGGSRNMGGPYGGGNYGPGGSGGSGGYGGRSRY) are enriched in gly residues. A Phosphoserine modification is found at Ser324. Omega-N-methylarginine is present on Arg325. Tyr331 carries the post-translational modification Phosphotyrosine. Phosphoserine occurs at positions 341 and 344. The residue at position 347 (Tyr347) is a Phosphotyrosine. Arg350 carries the omega-N-methylarginine modification.

As to quaternary structure, homodimer; dimerization is required for nucleocytoplasmic translocation. Identified in the spliceosome C complex. Identified in a IGF2BP1-dependent mRNP granule complex containing untranslated mRNAs. Interacts with IGF2BP1. Interacts with C9orf72. Interacts with DGCR8. Interacts with TARDBP. Interacts with CKAP5. Interacts with TBK1. Interacts with STING1. Interacts with SRC. Interacts with PPIA/CYPA. Interacts (via C-terminus) with FAM76B; the interaction results in retention of HNRNPA2B1 in the nucleus and inhibition of the NF-kappa-B-mediated inflammatory pathway. Interacts with NF-kappa-B inhibitors NFKBIA and NFKBIE; the interaction may be mediated by the RRM2 domain of HNRNPA2B1, and HNRNPA2B1 may interact simultaneously with FAM76B and either NFKBIA or NFKBIE to form a complex. Sumoylated in exosomes, promoting miRNAs-binding. In terms of processing, asymmetric dimethylation at Arg-266 constitutes the major methylation site. According to a report, methylation affects subcellular location and promotes nuclear localization. According to another report, methylation at Arg-266 does not influence nucleocytoplasmic shuttling.

Its subcellular location is the nucleus. It is found in the nucleoplasm. The protein resides in the cytoplasm. The protein localises to the cytoplasmic granule. It localises to the secreted. Its subcellular location is the extracellular exosome. Functionally, heterogeneous nuclear ribonucleoprotein (hnRNP) that associates with nascent pre-mRNAs, packaging them into hnRNP particles. The hnRNP particle arrangement on nascent hnRNA is non-random and sequence-dependent and serves to condense and stabilize the transcripts and minimize tangling and knotting. Packaging plays a role in various processes such as transcription, pre-mRNA processing, RNA nuclear export, subcellular location, mRNA translation and stability of mature mRNAs. Forms hnRNP particles with at least 20 other different hnRNP and heterogeneous nuclear RNA in the nucleus. Involved in transport of specific mRNAs to the cytoplasm in oligodendrocytes and neurons: acts by specifically recognizing and binding the A2RE (21 nucleotide hnRNP A2 response element) or the A2RE11 (derivative 11 nucleotide oligonucleotide) sequence motifs present on some mRNAs, and promotes their transport to the cytoplasm. Specifically binds single-stranded telomeric DNA sequences, protecting telomeric DNA repeat against endonuclease digestion. Also binds other RNA molecules, such as primary miRNA (pri-miRNAs): acts as a nuclear 'reader' of the N6-methyladenosine (m6A) mark by specifically recognizing and binding a subset of nuclear m6A-containing pri-miRNAs. Binding to m6A-containing pri-miRNAs promotes pri-miRNA processing by enhancing binding of DGCR8 to pri-miRNA transcripts. Involved in miRNA sorting into exosomes following sumoylation, possibly by binding (m6A)-containing pre-miRNAs. Acts as a regulator of efficiency of mRNA splicing, possibly by binding to m6A-containing pre-mRNAs. Plays a role in the splicing of pyruvate kinase PKM by binding repressively to sequences flanking PKM exon 9, inhibiting exon 9 inclusion and resulting in exon 10 inclusion and production of the PKM M2 isoform. Also plays a role in the activation of the innate immune response. Mechanistically, senses the presence of viral DNA in the nucleus, homodimerizes and is demethylated by JMJD6. In turn, translocates to the cytoplasm where it activates the TBK1-IRF3 pathway, leading to interferon alpha/beta production. In terms of biological role, (Microbial infection) Involved in the transport of HIV-1 genomic RNA out of the nucleus, to the microtubule organizing center (MTOC), and then from the MTOC to the cytoplasm: acts by specifically recognizing and binding the A2RE (21 nucleotide hnRNP A2 response element) sequence motifs present on HIV-1 genomic RNA, and promotes its transport. The protein is Heterogeneous nuclear ribonucleoproteins A2/B1 (HNRNPA2B1) of Homo sapiens (Human).